The primary structure comprises 643 residues: Galactan 5-O-arabinofuranosyltransferase (643 aa).

13 helical membrane-spanning segments follow: residues 25-45 (VLVA…VAVV), 66-86 (ALTT…GWLW), 97-117 (LGGL…PLGA), 180-200 (FKPW…VLWW), 205-225 (FEYA…YSSP), 229-249 (AAMI…GLGA), 255-272 (WAAV…ATWY), 276-293 (VAYG…LAGS), 309-329 (LAVV…PYLL), 355-375 (FPML…LWLV), 384-404 (AGAL…SMLA), 420-440 (LSVL…QALG), and 445-465 (GVIP…SQDI). Residues 466-643 (PDVLRPDLTI…LAIRKPQESA (178 aa)) are Extracellular-facing.

It belongs to the glycosyltransferase 85 family.

It localises to the cell membrane. The catalysed reaction is Adds an alpha-D-arabinofuranosyl group from trans,octacis-decaprenylphospho-beta-D-arabinofuranose at the 5-O-position of the eighth, tenth and twelfth galactofuranose unit of the galactofuranan chain of [beta-D-galactofuranosyl-(1-&gt;5)-beta-D-galactofuranosyl-(1-&gt;6)]14-beta-D-galactofuranosyl-(1-&gt;5)-beta-D-galactofuranosyl-(1-&gt;4)-alpha-L-rhamnopyranosyl-(1-&gt;3)-N-acetyl-alpha-D-glucosaminyl-diphospho-trans,octacis-decaprenol.. It participates in cell wall biogenesis; cell wall polysaccharide biosynthesis. Its function is as follows. Involved in the biosynthesis of the arabinogalactan (AG) region of the mycolylarabinogalactan-peptidoglycan (mAGP) complex, an essential component of the mycobacterial cell wall. Catalyzes the addition of the first key arabinofuranosyl (Araf) residue from the sugar donor decaprenyl-phospho-arabinose (DPA) on the C-5 of a 6-linked galactofuranosyl (Galf) of the galactan domain, thus 'priming' the galactan for further elaboration by other arabinofuranosyltransferases. It is not able to add an Araf residue to a terminal Galf. The sequence is that of Galactan 5-O-arabinofuranosyltransferase from Mycobacterium tuberculosis (strain CDC 1551 / Oshkosh).